The sequence spans 517 residues: Zinc finger protein AEBP2 (517 aa).

Positions 1–229 (MAAAITDMAD…DSEDSISSTI (229 aa)) are disordered. An N-acetylalanine modification is found at alanine 2. Residues serine 18 and serine 24 each carry the phosphoserine modification. Residues 36-51 (PEEEEEEEEEEEEAEA) are compositionally biased toward acidic residues. Gly residues predominate over residues 61–78 (GGSGGGGGGGGGGVGGGE). Over residues 94–121 (GEDEDEEEDDEEEEDESSSSGGGEEESS) the composition is skewed to acidic residues. Residues 122 to 150 (AESLVGSSGGSSSDETRSLSPGAASSSSG) show a composition bias toward low complexity. A Phosphoserine modification is found at serine 141. Basic and acidic residues predominate over residues 152 to 163 (GDGKEGLEEPKG). Gly residues-rich tracts occupy residues 166–175 (GSQGGGGGGS) and 185–196 (GDEGYGTGGGGS). Serine 206, serine 210, and serine 211 each carry phosphoserine. The tract at residues 209 to 294 (MSSDGEPLSR…IHVDGQRGGV (86 aa)) is interaction with RBBP4. A C2H2-type 1 zinc finger spans residues 261-286 (YNCCWDQCQACFNSSPDLADHIRSIH). A C2H2-type 2; degenerate zinc finger spans residues 300-322 (KGCKVYNTPSTSQSWLQRHMLTH). A C2H2-type 3 zinc finger spans residues 328 to 352 (FKCVVGGCNASFASQGGLARHVPTH). Over residues 352–365 (HFSQQNSSKVSSQP) the composition is skewed to polar residues. The tract at residues 352-394 (HFSQQNSSKVSSQPKAKEESPSKAGMNKRRKLKNKRRRSLPRP) is disordered. Residues 377–392 (MNKRRKLKNKRRRSLP) are compositionally biased toward basic residues. A Phosphoserine modification is found at serine 390. Residues 407–478 (RHRAICFNLS…QLKTKVVHLS (72 aa)) form an interaction with SUZ12 region. Residues 495–517 (TMPQKRLKRTLIRKVFNLYLSKQ) form an important for nucleosome binding activity of the PRC2 complex region.

This sequence belongs to the AEBP2/jing C2H2-type zinc-finger family. In terms of assembly, self-associates. Associates with the PRC2 complex, which consists of the core components EED, EZH1 or EZH2, SUZ12, and RBBP4, and various combinations of accessory subunits including AEBP2, JARID2, PHF19, MTF2 and EPOP. Found in a monomeric PRC2.2 (class 2) complex consisting of at least SUZ12, RBBP4, AEBP2 and JARID2. Within the PRC2 complex, interacts directly with SUZ12; competes with PHF19 for SUZ12 binding. Interacts with EED, EZH2, and RBBP4. May also interact with RBBP7.

It localises to the nucleus. In terms of biological role, acts as an accessory subunit for the core Polycomb repressive complex 2 (PRC2), which mediates histone H3K27 (H3K27me3) trimethylation on chromatin leading to transcriptional repression of the affected target gene. Plays a role in nucleosome localization of the PRC2 complex. The chain is Zinc finger protein AEBP2 (AEBP2) from Homo sapiens (Human).